The primary structure comprises 29 residues: Cyclotide psyleio B (29 aa).

Residues 1 to 29 constitute a cross-link (cyclopeptide (Gly-Arg)); it reads GDLPICGETCFGGTCNTPGCVCAWPVCNR. Disulfide bonds link Cys6-Cys20, Cys10-Cys22, and Cys15-Cys27.

This is a cyclic peptide.

Functionally, probably participates in a plant defense mechanism. The protein is Cyclotide psyleio B of Psychotria brachyceras.